Reading from the N-terminus, the 434-residue chain is Cobyrinate a,c-diamide synthase (434 aa).

One can recognise a GATase cobBQ-type domain in the interval 240–430 (KAYVAYDSAF…SHFHFSRTRR (191 aa)). Cys-322 functions as the Nucleophile in the catalytic mechanism.

Belongs to the CobB/CbiA family. It depends on Mg(2+) as a cofactor.

The enzyme catalyses cob(II)yrinate + 2 L-glutamine + 2 ATP + 2 H2O = cob(II)yrinate a,c diamide + 2 L-glutamate + 2 ADP + 2 phosphate + 2 H(+). The protein operates within cofactor biosynthesis; adenosylcobalamin biosynthesis; cob(II)yrinate a,c-diamide from sirohydrochlorin (anaerobic route): step 10/10. Functionally, catalyzes the ATP-dependent amidation of the two carboxylate groups at positions a and c of cobyrinate, using either L-glutamine or ammonia as the nitrogen source. In Sulfolobus acidocaldarius (strain ATCC 33909 / DSM 639 / JCM 8929 / NBRC 15157 / NCIMB 11770), this protein is Cobyrinate a,c-diamide synthase.